Reading from the N-terminus, the 335-residue chain is Methionine import ATP-binding protein MetN 1 (335 aa).

Residues 2–242 form the ABC transporter domain; it reads IEFQNVHKTY…PKHPTTKRFV (241 aa). ATP is bound at residue 38-45; the sequence is GHSGAGKS.

Belongs to the ABC transporter superfamily. Methionine importer (TC 3.A.1.24) family. As to quaternary structure, the complex is composed of two ATP-binding proteins (MetN), two transmembrane proteins (MetI) and a solute-binding protein (MetQ).

The protein resides in the cell inner membrane. The catalysed reaction is L-methionine(out) + ATP + H2O = L-methionine(in) + ADP + phosphate + H(+). The enzyme catalyses D-methionine(out) + ATP + H2O = D-methionine(in) + ADP + phosphate + H(+). Functionally, part of the ABC transporter complex MetNIQ involved in methionine import. Responsible for energy coupling to the transport system. This Pseudomonas fluorescens (strain Pf0-1) protein is Methionine import ATP-binding protein MetN 1.